A 456-amino-acid chain; its full sequence is Ezy-1 protein (456 aa).

Positions 1–28 are cleaved as a signal peptide; that stretch reads MQLSSSLRSARSAAASSGCALASRPVVA. Disordered stretches follow at residues 167–189, 273–310, and 414–456; these read SDGGGDESGDRRTADAADADGDG, FTGKAEPGAEGDDGEDEEEGEAQGVGEDAVDSSSGGSG, and QPAG…SPNM. A compositionally biased stretch (acidic residues) spans 281 to 293; it reads AEGDDGEDEEEGE. The segment covering 418-428 has biased composition (basic and acidic residues); that stretch reads DGHEPEPKRPE.

The polypeptide is Ezy-1 protein (Ezy-1) (Chlamydomonas reinhardtii (Chlamydomonas smithii)).